The primary structure comprises 70 residues: Omega-conotoxin-like Bu1 (70 aa).

Residues Met1–Ala22 form the signal peptide. Positions Glu23–Arg45 are excised as a propeptide. 3 disulfides stabilise this stretch: Cys46/Cys61, Cys53/Cys65, and Cys60/Cys70.

Belongs to the conotoxin O1 superfamily. Expressed by the venom duct.

It localises to the secreted. Omega-conotoxins act at presynaptic membranes, they bind and block voltage-gated calcium channels (Cav). This is Omega-conotoxin-like Bu1 from Conus bullatus (Bubble cone).